Reading from the N-terminus, the 678-residue chain is MKKNISYGKHKTFPSKLNGLEKQHSLSKNERDNFPFLSNIPWDNANQGSDKNQLKGAKLIQEFVKHLPHKPGVYRMFDENGNVLYIGKARNLKKRVSNYTCEQRHNNRITRMIRATYHMEFVVTHTETEALLLEANLIKRLHPRFNVLLRDDKSFPYIIITENHRAPALYKHRGARTRKAHYFGPFASSSAVTQTINVLQRAFLLRTCTDSVLENRTRPCLLYQIKRCSAPCTHEINENDYRELVRGAKAFLSGKSQSVKNDMIQAMHKAAEDLDFEQAAVYRDRLSALSHIQSHQGINPQTIEEADVFAIAQKGGITCIQVFFFRMRQNWGNRSYFPKADPSFSRSEILASFLAQFYDDKPLPKLILLSEEIEEKTLLAEAFSLKANRKIFLSLPKQGERKTLVNHAYINAYEALGHKLAETATHTKLLQGIAEVFQLPQTPHRIEVYDNSHLMGTNAVGAMIVADQMGFLKNQYRKFNIRSTDITPGDDFGMMKEVIKRRFSRLIKEHGLPHESNSIKGEDEDCFSIWPNLILIDGGEGQINSVHTILSELKLDDFITVVGIAKGADRGAGHERFFIKGKTPFTLPPHDPILYFLQRLRDEAHRFAIKTHRIKRKKATLKNPLDEIKNIGSTRKRALLHHFGSAKIVASASLEDLTKVTGISVTIAQKIHNHFNEK.

The segment covering 1-13 has biased composition (basic residues); sequence MKKNISYGKHKTF. The disordered stretch occupies residues 1–25; the sequence is MKKNISYGKHKTFPSKLNGLEKQHS. The 79-residue stretch at 69–147 folds into the GIY-YIG domain; sequence HKPGVYRMFD…IKRLHPRFNV (79 aa). The UVR domain maps to 257–292; that stretch reads QSVKNDMIQAMHKAAEDLDFEQAAVYRDRLSALSHI.

The protein belongs to the UvrC family. As to quaternary structure, interacts with UvrB in an incision complex.

The protein localises to the cytoplasm. Its function is as follows. The UvrABC repair system catalyzes the recognition and processing of DNA lesions. UvrC both incises the 5' and 3' sides of the lesion. The N-terminal half is responsible for the 3' incision and the C-terminal half is responsible for the 5' incision. This Bartonella quintana (strain Toulouse) (Rochalimaea quintana) protein is UvrABC system protein C.